The following is a 223-amino-acid chain: GTP cyclohydrolase 1 (223 aa).

Zn(2+) is bound by residues Cys-111, His-114, and Cys-182.

Belongs to the GTP cyclohydrolase I family. As to quaternary structure, homomer.

The enzyme catalyses GTP + H2O = 7,8-dihydroneopterin 3'-triphosphate + formate + H(+). Its pathway is cofactor biosynthesis; 7,8-dihydroneopterin triphosphate biosynthesis; 7,8-dihydroneopterin triphosphate from GTP: step 1/1. This Flavobacterium johnsoniae (strain ATCC 17061 / DSM 2064 / JCM 8514 / BCRC 14874 / CCUG 350202 / NBRC 14942 / NCIMB 11054 / UW101) (Cytophaga johnsonae) protein is GTP cyclohydrolase 1.